We begin with the raw amino-acid sequence, 434 residues long: Chaperone SurA (434 aa).

Positions 1–22 (MKHSKKIVTALLALAMSQTVMA) are cleaved as a signal peptide. 2 PpiC domains span residues 173–274 (EVEF…KVMD) and 283–383 (VEEV…QLMD).

The protein resides in the periplasm. It catalyses the reaction [protein]-peptidylproline (omega=180) = [protein]-peptidylproline (omega=0). Functionally, chaperone involved in the correct folding and assembly of outer membrane proteins. Recognizes specific patterns of aromatic residues and the orientation of their side chains, which are found more frequently in integral outer membrane proteins. May act in both early periplasmic and late outer membrane-associated steps of protein maturation. The chain is Chaperone SurA from Shewanella denitrificans (strain OS217 / ATCC BAA-1090 / DSM 15013).